Here is a 310-residue protein sequence, read N- to C-terminus: MEFKHVSVLLNECIEALNIKENGIYVDGTLGGAGHSSHILSNLSKDGMLIGIDQDQDALKAAKEKLKDFENVKYVHSNFYNIDSILNDLDIEKVDGILMDLGVSSYQLDEASRGFSYMKDAPLDMRMNRENDFSAYNIVNNYDEDSLYKIIKDYGEERFAKRIANFIINRRIEKPIETTFELVDIIKAAIPAKMRREGPHPAKRTFQAIRIEVNSELKILNKTIEDGVNRLNKGGRMAIITFHSLEDRIVKLKFRELENPCTCPKEFPMCICGKSPLVKNIAKKGIAPTKEEIEENPRSRSAKLRVIEKL.

Residues 33–35 (AGH), aspartate 53, phenylalanine 79, aspartate 100, and glutamine 107 each bind S-adenosyl-L-methionine.

It belongs to the methyltransferase superfamily. RsmH family.

The protein resides in the cytoplasm. The enzyme catalyses cytidine(1402) in 16S rRNA + S-adenosyl-L-methionine = N(4)-methylcytidine(1402) in 16S rRNA + S-adenosyl-L-homocysteine + H(+). Its function is as follows. Specifically methylates the N4 position of cytidine in position 1402 (C1402) of 16S rRNA. This chain is Ribosomal RNA small subunit methyltransferase H, found in Clostridium beijerinckii (strain ATCC 51743 / NCIMB 8052) (Clostridium acetobutylicum).